The chain runs to 148 residues: Large-conductance mechanosensitive channel (148 aa).

Helical transmembrane passes span 9–29 and 79–99; these read AFAV…GAAF and IQTV…VKAI.

The protein belongs to the MscL family. As to quaternary structure, homopentamer.

Its subcellular location is the cell inner membrane. Functionally, channel that opens in response to stretch forces in the membrane lipid bilayer. May participate in the regulation of osmotic pressure changes within the cell. The polypeptide is Large-conductance mechanosensitive channel (Pseudomonas savastanoi pv. phaseolicola (strain 1448A / Race 6) (Pseudomonas syringae pv. phaseolicola (strain 1448A / Race 6))).